The chain runs to 312 residues: Beta-ketoacyl-[acyl-carrier-protein] synthase III 1 (312 aa).

Active-site residues include C113 and H237. Positions 238 to 242 (QANIR) are ACP-binding. The active site involves N267.

This sequence belongs to the thiolase-like superfamily. FabH family. In terms of assembly, homodimer.

The protein resides in the cytoplasm. It carries out the reaction malonyl-[ACP] + acetyl-CoA + H(+) = 3-oxobutanoyl-[ACP] + CO2 + CoA. It functions in the pathway lipid metabolism; fatty acid biosynthesis. Catalyzes the condensation reaction of fatty acid synthesis by the addition to an acyl acceptor of two carbons from malonyl-ACP. Catalyzes the first condensation reaction which initiates fatty acid synthesis and may therefore play a role in governing the total rate of fatty acid production. Possesses both acetoacetyl-ACP synthase and acetyl transacylase activities. Its substrate specificity determines the biosynthesis of branched-chain and/or straight-chain of fatty acids. This Halalkalibacterium halodurans (strain ATCC BAA-125 / DSM 18197 / FERM 7344 / JCM 9153 / C-125) (Bacillus halodurans) protein is Beta-ketoacyl-[acyl-carrier-protein] synthase III 1.